A 528-amino-acid polypeptide reads, in one-letter code: MTTFRELGLSDSLLQSVESMGFEEATPIQAETIPHALQGKDIIGQAQTGTGKTAAFGLPLLDKVDTHKESVQGIVIAPTRELAIQVGEELYKIGKHKRVRILPIYGGQDINRQIRALKKHPHIIVGTPGRILDHINRKTLRLQNVETVVLDEADEMLNMGFIEDIEAILTDVPETHQTLLFSATMPDPIRRIAERFMTEPQHIKVKAKEVTMPNIQQFYLEVQEKKKFDVLTRLLDIQSPELAIVFGRTKRRVDELSEALNLRGYAAEGIHGDLTQAKRMSVLRKFKEGSIEVLVATDVAARGLDISGVTHVYNFDIPQDPESYVHRIGRTGRAGKKGIAMLFVTPRESGQLKNIERTTKRKMDRMDAPTLDEALEGQQRLIAEKLQSTIENENLAYYKRIAEEMLEENDSVTVVAAALKMMTKEPDTTPIALTSEPPVVSRGGGSKKRGGNGGGYRDGNRNRSRDGRGGDGRNRDRNRDGRNRDGNRDRNREGSRDGNRGRRGEGQGRPGSSNGRGERKHHSRKPQA.

Positions 2 to 30 match the Q motif motif; it reads TTFRELGLSDSLLQSVESMGFEEATPIQA. The 171-residue stretch at 33 to 203 folds into the Helicase ATP-binding domain; the sequence is IPHALQGKDI…ERFMTEPQHI (171 aa). ATP is bound at residue 46–53; sequence AQTGTGKT. Residues 151–154 carry the DEAD box motif; sequence DEAD. Residues 214–374 enclose the Helicase C-terminal domain; it reads NIQQFYLEVQ…RMDAPTLDEA (161 aa). Residues 428-528 form a disordered region; it reads TTPIALTSEP…RKHHSRKPQA (101 aa). The span at 458-506 shows a compositional bias: basic and acidic residues; that stretch reads DGNRNRSRDGRGGDGRNRDRNRDGRNRDGNRDRNREGSRDGNRGRRGEG. Residues 518–528 show a composition bias toward basic residues; that stretch reads ERKHHSRKPQA.

Belongs to the DEAD box helicase family. CshA subfamily. As to quaternary structure, oligomerizes, may be a member of the RNA degradosome.

The protein resides in the cytoplasm. The catalysed reaction is ATP + H2O = ADP + phosphate + H(+). Its function is as follows. DEAD-box RNA helicase possibly involved in RNA degradation. Unwinds dsRNA in both 5'- and 3'-directions, has RNA-dependent ATPase activity. The protein is DEAD-box ATP-dependent RNA helicase CshA of Bacillus thuringiensis (strain Al Hakam).